A 338-amino-acid polypeptide reads, in one-letter code: Fructose-1,6-bisphosphatase class 1 1 (338 aa).

Mg(2+) is bound by residues E91, D113, L115, and D116. Residues 116–119 (DGSS), N208, and K274 contribute to the substrate site. Residue E280 participates in Mg(2+) binding.

This sequence belongs to the FBPase class 1 family. As to quaternary structure, homotetramer. It depends on Mg(2+) as a cofactor.

It localises to the cytoplasm. The enzyme catalyses beta-D-fructose 1,6-bisphosphate + H2O = beta-D-fructose 6-phosphate + phosphate. It participates in carbohydrate biosynthesis; gluconeogenesis. This chain is Fructose-1,6-bisphosphatase class 1 1, found in Cupriavidus metallidurans (strain ATCC 43123 / DSM 2839 / NBRC 102507 / CH34) (Ralstonia metallidurans).